Reading from the N-terminus, the 45-residue chain is uncharacterized protein (45 aa).

It belongs to the asfivirus C62L family.

This is an uncharacterized protein from Ornithodoros (relapsing fever ticks).